The primary structure comprises 301 residues: Glycine--tRNA ligase alpha subunit (301 aa).

This sequence belongs to the class-II aminoacyl-tRNA synthetase family. As to quaternary structure, tetramer of two alpha and two beta subunits.

It localises to the cytoplasm. The enzyme catalyses tRNA(Gly) + glycine + ATP = glycyl-tRNA(Gly) + AMP + diphosphate. The polypeptide is Glycine--tRNA ligase alpha subunit (Neisseria meningitidis serogroup C (strain 053442)).